A 181-amino-acid polypeptide reads, in one-letter code: ATP synthase subunit b (181 aa).

The helical transmembrane segment at 12–32 threads the bilayer; the sequence is LPAVYDIVWSAVVFVVLLVVI.

It belongs to the ATPase B chain family. In terms of assembly, F-type ATPases have 2 components, F(1) - the catalytic core - and F(0) - the membrane proton channel. F(1) has five subunits: alpha(3), beta(3), gamma(1), delta(1), epsilon(1). F(0) has three main subunits: a(1), b(2) and c(10-14). The alpha and beta chains form an alternating ring which encloses part of the gamma chain. F(1) is attached to F(0) by a central stalk formed by the gamma and epsilon chains, while a peripheral stalk is formed by the delta and b chains.

Its subcellular location is the cell membrane. Functionally, f(1)F(0) ATP synthase produces ATP from ADP in the presence of a proton or sodium gradient. F-type ATPases consist of two structural domains, F(1) containing the extramembraneous catalytic core and F(0) containing the membrane proton channel, linked together by a central stalk and a peripheral stalk. During catalysis, ATP synthesis in the catalytic domain of F(1) is coupled via a rotary mechanism of the central stalk subunits to proton translocation. In terms of biological role, component of the F(0) channel, it forms part of the peripheral stalk, linking F(1) to F(0). The polypeptide is ATP synthase subunit b (Clavibacter sepedonicus (Clavibacter michiganensis subsp. sepedonicus)).